The sequence spans 227 residues: Protein FAM3C (227 aa).

Positions 1 to 24 (MRVAGAAKLVVAVAVFLLTFYVIS) are cleaved as a signal peptide. 2 disulfide bridges follow: Cys-58-Cys-86 and Cys-64-Cys-221. In terms of domain architecture, GG-type lectin spans 67 to 225 (KHFAFKMASG…VEMEGCIPQK (159 aa)).

Belongs to the FAM3 family.

It localises to the secreted. The protein localises to the cytoplasmic vesicle. May be involved in retinal laminar formation. Promotes epithelial to mesenchymal transition. The chain is Protein FAM3C (Fam3c) from Rattus norvegicus (Rat).